The chain runs to 319 residues: L-lactate dehydrogenase (319 aa).

NAD(+) is bound by residues Val17, Asp38, Lys43, Tyr69, and 83–84 (GA). Residues Gln86, Arg92, and 124 to 127 (NPVD) contribute to the substrate site. Residues 122 to 124 (ATN) and Ser147 contribute to the NAD(+) site. 152–155 (DTAR) serves as a coordination point for substrate. Beta-D-fructose 1,6-bisphosphate is bound by residues Arg157 and His172. The active-site Proton acceptor is His179. Tyr224 bears the Phosphotyrosine mark. Thr233 contributes to the substrate binding site.

This sequence belongs to the LDH/MDH superfamily. LDH family. As to quaternary structure, homotetramer.

The protein resides in the cytoplasm. The catalysed reaction is (S)-lactate + NAD(+) = pyruvate + NADH + H(+). Its pathway is fermentation; pyruvate fermentation to lactate; (S)-lactate from pyruvate: step 1/1. With respect to regulation, allosterically activated by fructose 1,6-bisphosphate (FBP). Its function is as follows. Catalyzes the conversion of lactate to pyruvate. This is L-lactate dehydrogenase from Bacillus licheniformis (strain ATCC 14580 / DSM 13 / JCM 2505 / CCUG 7422 / NBRC 12200 / NCIMB 9375 / NCTC 10341 / NRRL NRS-1264 / Gibson 46).